We begin with the raw amino-acid sequence, 217 residues long: 3,4-dihydroxy-2-butanone 4-phosphate synthase (217 aa).

Residues Arg37–Glu38, Asp42, Arg150–Thr154, and Glu174 each bind D-ribulose 5-phosphate. Mg(2+) is bound at residue Glu38. Position 153 (His153) interacts with Mg(2+).

The protein belongs to the DHBP synthase family. Homodimer. It depends on Mg(2+) as a cofactor. Requires Mn(2+) as cofactor.

It carries out the reaction D-ribulose 5-phosphate = (2S)-2-hydroxy-3-oxobutyl phosphate + formate + H(+). The protein operates within cofactor biosynthesis; riboflavin biosynthesis; 2-hydroxy-3-oxobutyl phosphate from D-ribulose 5-phosphate: step 1/1. In terms of biological role, catalyzes the conversion of D-ribulose 5-phosphate to formate and 3,4-dihydroxy-2-butanone 4-phosphate. The polypeptide is 3,4-dihydroxy-2-butanone 4-phosphate synthase (Klebsiella pneumoniae subsp. pneumoniae (strain ATCC 700721 / MGH 78578)).